The following is a 354-amino-acid chain: Protein CbrA (354 aa).

Belongs to the CbrA family.

The polypeptide is Protein CbrA (cbrA) (Escherichia coli (strain K12)).